The sequence spans 877 residues: AP-5 complex subunit beta-1 (877 aa).

As to quaternary structure, probably part of the adaptor protein complex 5 (AP-5), a tetramer composed of AP5B1, AP5M1, AP5S1 and AP5Z1. Interacts with ZFYVE26 and SPG11.

As part of AP-5, a probable fifth adaptor protein complex, it may be involved in endosomal transport. This chain is AP-5 complex subunit beta-1 (AP5B1), found in Bos taurus (Bovine).